The primary structure comprises 380 residues: Cystathionine gamma-synthase (380 aa).

K195 is subject to N6-(pyridoxal phosphate)lysine.

This sequence belongs to the trans-sulfuration enzymes family. Homotetramer. Pyridoxal 5'-phosphate serves as cofactor.

Its subcellular location is the cytoplasm. It catalyses the reaction O-succinyl-L-homoserine + L-cysteine = L,L-cystathionine + succinate + H(+). It functions in the pathway amino-acid biosynthesis; L-methionine biosynthesis via de novo pathway; L-cystathionine from O-succinyl-L-homoserine: step 1/1. Its activity is regulated as follows. Four natural products, alpha-lapachone, 9-hydroxy-alpha-lapachone, Paulownin, and Yangambin, show strong inhibitory activities against CGS. All these four inhibitors prevent the binding of OSHS to CGS in a non-competitive fashion. These compounds are specific inhibitors against CGS from H.pylori relative to E.coli since they exhibit very low inhibition activities against CGS from E.coli. Catalyzes the formation of L-cystathionine from O-succinyl-L-homoserine (OSHS) and L-cysteine, via a gamma-replacement reaction. In the absence of thiol, catalyzes gamma-elimination to form 2-oxobutanoate, succinate and ammonia. The chain is Cystathionine gamma-synthase (metB) from Helicobacter pylori (Campylobacter pylori).